A 100-amino-acid chain; its full sequence is Urease subunit gamma (100 aa).

The protein belongs to the urease gamma subunit family. Heterotrimer of UreA (gamma), UreB (beta) and UreC (alpha) subunits. Three heterotrimers associate to form the active enzyme.

The protein resides in the cytoplasm. The enzyme catalyses urea + 2 H2O + H(+) = hydrogencarbonate + 2 NH4(+). It functions in the pathway nitrogen metabolism; urea degradation; CO(2) and NH(3) from urea (urease route): step 1/1. The protein is Urease subunit gamma of Tolumonas auensis (strain DSM 9187 / NBRC 110442 / TA 4).